Reading from the N-terminus, the 382-residue chain is Alkanesulfonate monooxygenase (382 aa).

The protein belongs to the SsuD family.

The enzyme catalyses an alkanesulfonate + FMNH2 + O2 = an aldehyde + FMN + sulfite + H2O + 2 H(+). In terms of biological role, catalyzes the desulfonation of aliphatic sulfonates. The chain is Alkanesulfonate monooxygenase from Pseudomonas putida (strain ATCC 700007 / DSM 6899 / JCM 31910 / BCRC 17059 / LMG 24140 / F1).